Reading from the N-terminus, the 429-residue chain is Phosphomethylpyrimidine synthase 1 (429 aa).

Substrate contacts are provided by residues N65, M94, Y123, H162, 184-186 (SRG), 225-228 (DGLR), and E264. H268 provides a ligand contact to Zn(2+). Y291 provides a ligand contact to substrate. A Zn(2+)-binding site is contributed by H332. [4Fe-4S] cluster is bound by residues C408, C411, and C415.

This sequence belongs to the ThiC family. The cofactor is [4Fe-4S] cluster.

The enzyme catalyses 5-amino-1-(5-phospho-beta-D-ribosyl)imidazole + S-adenosyl-L-methionine = 4-amino-2-methyl-5-(phosphooxymethyl)pyrimidine + CO + 5'-deoxyadenosine + formate + L-methionine + 3 H(+). The protein operates within cofactor biosynthesis; thiamine diphosphate biosynthesis. In terms of biological role, catalyzes the synthesis of the hydroxymethylpyrimidine phosphate (HMP-P) moiety of thiamine from aminoimidazole ribotide (AIR) in a radical S-adenosyl-L-methionine (SAM)-dependent reaction. This Methanosphaera stadtmanae (strain ATCC 43021 / DSM 3091 / JCM 11832 / MCB-3) protein is Phosphomethylpyrimidine synthase 1.